Reading from the N-terminus, the 280-residue chain is 4-diphosphocytidyl-2-C-methyl-D-erythritol kinase (280 aa).

The active site involves K11. 95–105 provides a ligand contact to ATP; that stretch reads PVGAGLGGGSS. Residue D137 is part of the active site.

It belongs to the GHMP kinase family. IspE subfamily.

It carries out the reaction 4-CDP-2-C-methyl-D-erythritol + ATP = 4-CDP-2-C-methyl-D-erythritol 2-phosphate + ADP + H(+). It participates in isoprenoid biosynthesis; isopentenyl diphosphate biosynthesis via DXP pathway; isopentenyl diphosphate from 1-deoxy-D-xylulose 5-phosphate: step 3/6. Its function is as follows. Catalyzes the phosphorylation of the position 2 hydroxy group of 4-diphosphocytidyl-2C-methyl-D-erythritol. This chain is 4-diphosphocytidyl-2-C-methyl-D-erythritol kinase, found in Citrifermentans bemidjiense (strain ATCC BAA-1014 / DSM 16622 / JCM 12645 / Bem) (Geobacter bemidjiensis).